Reading from the N-terminus, the 422-residue chain is Serine--tRNA ligase (422 aa).

L-serine is bound at residue 230 to 232 (TAE). 261–263 (RAE) contributes to the ATP binding site. Glu-284 contacts L-serine. An ATP-binding site is contributed by 348-351 (EISS). Ser-383 provides a ligand contact to L-serine.

This sequence belongs to the class-II aminoacyl-tRNA synthetase family. Type-1 seryl-tRNA synthetase subfamily. In terms of assembly, homodimer. The tRNA molecule binds across the dimer.

It localises to the cytoplasm. It carries out the reaction tRNA(Ser) + L-serine + ATP = L-seryl-tRNA(Ser) + AMP + diphosphate + H(+). The catalysed reaction is tRNA(Sec) + L-serine + ATP = L-seryl-tRNA(Sec) + AMP + diphosphate + H(+). It participates in aminoacyl-tRNA biosynthesis; selenocysteinyl-tRNA(Sec) biosynthesis; L-seryl-tRNA(Sec) from L-serine and tRNA(Sec): step 1/1. In terms of biological role, catalyzes the attachment of serine to tRNA(Ser). Is also able to aminoacylate tRNA(Sec) with serine, to form the misacylated tRNA L-seryl-tRNA(Sec), which will be further converted into selenocysteinyl-tRNA(Sec). The protein is Serine--tRNA ligase of Pelotomaculum thermopropionicum (strain DSM 13744 / JCM 10971 / SI).